The following is a 1192-amino-acid chain: Coiled-coil domain-containing protein 40 (1192 aa).

Disordered stretches follow at residues 1–78, 126–153, 173–196, 211–246, and 261–289; these read MMDA…PGMD, KAKH…LEVS, SSPE…NVSA, EPIE…YQRD, and GSLT…STPR. Positions 27-45 are enriched in acidic residues; it reads PETEVEFIGETAPDTDVEF. Pro residues predominate over residues 215-228; it reads PTEPPEPAEPPKPA. Residues 267–279 are compositionally biased toward acidic residues; that stretch reads DTDDLPLETDEPP. Residue S306 is modified to Phosphoserine. 7 coiled-coil regions span residues 308-369, 425-451, 581-649, 733-768, 830-871, 919-972, and 1044-1118; these read EALL…ATKQ, KTCQ…ALHL, DSEI…MLNK, NTNC…EIAR, LQQE…KIAH, LRTL…EMRS, and QQRE…IVTL.

The protein belongs to the CCDC40 family. In terms of tissue distribution, specifically expressed in the embryonic node and midline.

It is found in the cytoplasm. Its subcellular location is the cell projection. The protein localises to the cilium. In terms of biological role, required for assembly of dynein regulatory complex (DRC) and inner dynein arm (IDA) complexes, which are responsible for ciliary beat regulation, thereby playing a central role in motility in cilia and flagella. Probably acts together with CCDC39 to form a molecular ruler that determines the 96 nanometer (nm) repeat length and arrangements of components in cilia and flagella. Not required for outer dynein arm complexes assembly. Required for axonemal recruitment of CCDC39. The chain is Coiled-coil domain-containing protein 40 from Mus musculus (Mouse).